We begin with the raw amino-acid sequence, 2776 residues long: A-kinase anchor protein 13 (2776 aa).

Disordered regions lie at residues 371-401 (KNKD…SCLQ), 452-518 (EPDA…TETT), 547-584 (PAEA…QSSP), 618-641 (TMPG…PAQS), 653-689 (EAGT…ESTM), 760-871 (VSQT…SPTA), 910-951 (ALGQ…IPGL), 995-1029 (GAAK…LPSG), 1431-1508 (LCDT…MDSI), 1527-1546 (PFRR…AEMN), and 1565-1603 (RRSF…FGGE). Residues 389–401 (DSGSASHQDSCLQ) are compositionally biased toward polar residues. The interval 493–515 (QNNKPQVGEGTKERLENSDSSTT) is important for interaction with PRKAR2A. Residues 560–573 (PTEKPGMETQERGC) are compositionally biased toward basic and acidic residues. Positions 659-672 (AEATHQPSTVTSSG) are enriched in polar residues. The span at 773-788 (SPPASSFSLASSPESE) shows a compositional bias: low complexity. Residue serine 784 is modified to Phosphoserine. Threonine 809 bears the Phosphothreonine mark. 2 stretches are compositionally biased toward basic and acidic residues: residues 820–834 (DGPD…DKVG) and 914–940 (DGKD…EDQR). Position 941 is a phosphothreonine (threonine 941). Over residues 1005-1020 (TSLSADSKQKASSTEQ) the composition is skewed to polar residues. Over residues 1433–1444 (DTTGSSSSTDDT) the composition is skewed to low complexity. A compositionally biased stretch (polar residues) spans 1454–1476 (GSDVSLPQTSKLNRSRNHQSANG). Residues serine 1455, serine 1473, serine 1507, serine 1532, and serine 1569 each carry the phosphoserine modification. The tract at residues 1552 to 1678 (RALGHVVRRP…SRPFHSTSAN (127 aa)) is important for interaction with MAP2K3. A compositionally biased stretch (low complexity) spans 1583–1594 (SSSLEMSSANSS). A phosphoserine mark is found at serine 1608, serine 1611, and serine 1613. At lysine 1637 the chain carries N6-methyllysine. The interval 1711 to 1756 (TFSYIRNKMSSSKKSKEKEKEKDKIKEKEKDSKEKEKDKKTLNGHT) is disordered. The span at 1724-1751 (KSKEKEKEKDKIKEKEKDSKEKEKDKKT) shows a compositional bias: basic and acidic residues. The segment at 1754-1801 (GHTFSPIPIVGPISCSQCMKPFTNKDAYTCAGCGAFVHKGCRENLASC) adopts a Phorbol-ester/DAG-type zinc-finger fold. Phosphoserine occurs at positions 1839, 1858, and 1892. Positions 1882–2776 (MSNTWKFLSH…VPAEGEEIFC (895 aa)) are interaction with ESR1. At threonine 1893 the chain carries Phosphothreonine. Phosphoserine occurs at positions 1895 and 1908. A DH domain is found at 1957–2154 (KRQEVIYELM…KDVIGAVDSK (198 aa)). One can recognise a PH domain in the interval 2194–2296 (KLVRDGSVFL…WIQIIQDTIN (103 aa)). Residues serine 2308 and serine 2361 each carry the phosphoserine modification. The stretch at 2308 to 2345 (SENEEEKKLLDTKARELKEQLQQKDQQILLLLEEKEMI) forms a coiled coil. Position 2431 is a phosphothreonine (threonine 2431). Residues 2436–2471 (DCHQMNASKGGEKEEGDDGQDLRRTESDSGLKKGGN) are disordered. Over residues 2455 to 2466 (QDLRRTESDSGL) the composition is skewed to basic and acidic residues. A phosphoserine mark is found at serine 2527 and serine 2530. Positions 2532 to 2646 (LIEQEKQRSL…ERLSQRQMDQ (115 aa)) form a coiled coil. Disordered stretches follow at residues 2549 to 2605 (ANLQ…EELQ) and 2626 to 2776 (EREQ…EIFC). 2 stretches are compositionally biased toward basic and acidic residues: residues 2558–2605 (HLEE…EELQ) and 2626–2640 (EREQ…ERLS). Polar residues-rich tracts occupy residues 2641–2653 (QRQM…QVSN), 2665–2700 (LPNS…SISR), and 2713–2727 (SASQ…SQAP). Phosphoserine is present on residues serine 2673 and serine 2692.

In terms of assembly, interacts with the cAMP-dependent protein kinase (PKA) holoenzyme and with the regulatory subunit PRKAR2A. Interacts with RHOA. Also interacts with RHOB and RHOC. Identified in a ternary complex with RHOA and PRKAR2A. Identified in a complex with NR3C1 and RHOA. Interacts with BRAF and KSR1. Identified in a complex with BRAF and KSR1. Component of a signaling complex containing at least AKAP13, PKN1, MAPK14, ZAK and MAP2K3. Within this complex, AKAP13 interacts directly with PKN1, which in turn recruits MAPK14, MAP2K3 and ZAK. Interacts (phosphorylated form) with YWHAB and YWHAZ. Interaction with YWHAB inhibits activation of RHOA, interferes with PKN1 binding and activation of MAP kinases. Interacts with GNA12. Interacts with IKBKB. Interacts with ESR1, THRA, PPARA and NME2. Interacts (via the C-terminal domain after the PH domain) with MEF2C and RXRB. Interacts (via the C-terminal domain after the PH domain) with PRKD1. As to expression, detected in embryonic heart, limb bud, first branchial arch and forebrain (at protein level). Detected in heart. Detected in perichondrium, but not in the bone growth plate.

The protein resides in the cytoplasm. It localises to the cytosol. It is found in the cell cortex. Its subcellular location is the cytoskeleton. The protein localises to the nucleus. The protein resides in the membrane. Scaffold protein that plays an important role in assembling signaling complexes downstream of several types of G protein-coupled receptors. Activates RHOA in response to signaling via G protein-coupled receptors via its function as Rho guanine nucleotide exchange factor. May also activate other Rho family members. Part of a kinase signaling complex that links ADRA1A and ADRA1B adrenergic receptor signaling to the activation of downstream p38 MAP kinases, such as MAPK11 and MAPK14. Part of a signaling complex that links ADRA1B signaling to the activation of RHOA and IKBKB/IKKB, leading to increased NF-kappa-B transcriptional activity. Part of a RHOA-dependent signaling cascade that mediates responses to lysophosphatidic acid (LPA), a signaling molecule that activates G-protein coupled receptors and potentiates transcriptional activation of the glucocorticoid receptor NR3C1. Part of a signaling cascade that stimulates MEF2C-dependent gene expression in response to lysophosphatidic acid (LPA). Part of a signaling pathway that activates MAPK11 and/or MAPK14 and leads to increased transcription activation of the estrogen receptors ESR1 and ESR2. Part of a signaling cascade that links cAMP and EGFR signaling to BRAF signaling and to PKA-mediated phosphorylation of KSR1, leading to the activation of downstream MAP kinases, such as MAPK1 or MAPK3. Functions as a scaffold protein that anchors cAMP-dependent protein kinase (PKA) and PRKD1. This promotes activation of PRKD1, leading to increased phosphorylation of HDAC5 and ultimately cardiomyocyte hypertrophy. Has no guanine nucleotide exchange activity on CDC42, Ras or Rac. Required for normal embryonic heart development, and in particular for normal sarcomere formation in the developing cardiomyocytes. Plays a role in cardiomyocyte growth and cardiac hypertrophy in response to activation of the beta-adrenergic receptor by phenylephrine or isoproterenol. Required for normal adaptive cardiac hypertrophy in response to pressure overload. Plays a role in osteogenesis. This chain is A-kinase anchor protein 13, found in Mus musculus (Mouse).